The following is a 182-amino-acid chain: Isopentenyl-diphosphate Delta-isomerase (182 aa).

Positions 25 and 32 each coordinate Mn(2+). One can recognise a Nudix hydrolase domain in the interval 30-164 (LLHLAFSSWL…PWAFSPWMVM (135 aa)). Cysteine 67 is a catalytic residue. Residue histidine 69 participates in Mn(2+) binding. A Mg(2+)-binding site is contributed by glutamate 87. 2 residues coordinate Mn(2+): glutamate 114 and glutamate 116. Glutamate 116 is an active-site residue.

It belongs to the IPP isomerase type 1 family. Homodimer. The cofactor is Mg(2+). Mn(2+) is required as a cofactor.

It is found in the cytoplasm. It carries out the reaction isopentenyl diphosphate = dimethylallyl diphosphate. It participates in isoprenoid biosynthesis; dimethylallyl diphosphate biosynthesis; dimethylallyl diphosphate from isopentenyl diphosphate: step 1/1. In terms of biological role, catalyzes the 1,3-allylic rearrangement of the homoallylic substrate isopentenyl (IPP) to its highly electrophilic allylic isomer, dimethylallyl diphosphate (DMAPP). The protein is Isopentenyl-diphosphate Delta-isomerase of Escherichia coli (strain ATCC 8739 / DSM 1576 / NBRC 3972 / NCIMB 8545 / WDCM 00012 / Crooks).